The following is a 381-amino-acid chain: Alkanesulfonate monooxygenase (381 aa).

It belongs to the SsuD family. In terms of assembly, homotetramer.

The catalysed reaction is an alkanesulfonate + FMNH2 + O2 = an aldehyde + FMN + sulfite + H2O + 2 H(+). In terms of biological role, catalyzes the desulfonation of aliphatic sulfonates. The polypeptide is Alkanesulfonate monooxygenase (Escherichia coli O1:K1 / APEC).